The sequence spans 399 residues: Serine/threonine transporter SstT (399 aa).

9 helical membrane-spanning segments follow: residues 8 to 28 (LSLV…AFLF), 37 to 57 (IFGE…VFVL), 77 to 97 (ILFL…IADL), 134 to 154 (PVVA…IILG), 178 to 198 (VIHL…AVTF), 212 to 232 (LLLV…PIMV), 284 to 304 (VIIP…ITVL), 312 to 332 (LGIS…SISA), and 348 to 370 (VACS…GMVI).

This sequence belongs to the dicarboxylate/amino acid:cation symporter (DAACS) (TC 2.A.23) family.

The protein resides in the cell inner membrane. The enzyme catalyses L-serine(in) + Na(+)(in) = L-serine(out) + Na(+)(out). It carries out the reaction L-threonine(in) + Na(+)(in) = L-threonine(out) + Na(+)(out). Its function is as follows. Involved in the import of serine and threonine into the cell, with the concomitant import of sodium (symport system). The polypeptide is Serine/threonine transporter SstT (Acinetobacter baylyi (strain ATCC 33305 / BD413 / ADP1)).